Here is a 619-residue protein sequence, read N- to C-terminus: Chaperone protein HscA homolog (619 aa).

Belongs to the heat shock protein 70 family.

Chaperone involved in the maturation of iron-sulfur cluster-containing proteins. Has a low intrinsic ATPase activity which is markedly stimulated by HscB. This is Chaperone protein HscA homolog from Chromobacterium violaceum (strain ATCC 12472 / DSM 30191 / JCM 1249 / CCUG 213 / NBRC 12614 / NCIMB 9131 / NCTC 9757 / MK).